Here is a 310-residue protein sequence, read N- to C-terminus: Atrochrysone carboxyl ACP thioesterase CPUR_05436 (310 aa).

4 residues coordinate Zn(2+): His105, His107, Asp109, and His110. The active-site Proton donor/acceptor is Asp109.

This sequence belongs to the metallo-beta-lactamase superfamily. It depends on Zn(2+) as a cofactor.

The catalysed reaction is atrochrysone carboxyl-[ACP] + H2O = atrochrysone carboxylate + holo-[ACP] + H(+). It participates in pigment biosynthesis. Atrochrysone carboxyl ACP thioesterase; part of the ergochrome gene cluster responsible for the typical purple-black color of the ergot sclerotia. The ergochrome gene cluster produces several ergot pigments including the yellow ergochrome secalonic acid and its derivatives, as well as the red anthraquinones endocrocin and clavorubin. The pathway begins with the synthesis of atrochrysone thioester by the polyketide synthase (PKS) CPUR_05437. The atrochrysone carboxyl ACP thioesterase CPUR_05436 then breaks the thioester bond and releases the atrochrysone carboxylic acid from CPUR_05437. The atrochrysone carboxylic acid is then converted to atrochrysone which is further transformed into emodin anthrone. The next step is performed by the anthrone oxygenase CPUR_05434 that catalyzes the oxidation of emodinanthrone to emodin. Emodin is further modified to yield monodictyphenone via several steps involving CPUR_05427, CPUR_05428, CPUR_05429 and CPUR_05430. The short chain dehydrogenase/reductase CPUR_05418 then catalyzes the C-5 ketoreduction to give the xanthone skeleton of the monomeric units. Ergochromes formation requires further dimerization steps of different xanthone units, probably catalyzed by the cytochrome P450 monooxygenase CPUR_05419. CPUR_05425, CPUR_05426 and CPUR_05431 are unique to Claviceps, thus it is likely that they are involved in further modification of xanthone units or in their dimerization. The yellow ergochromes and the red anthraquinone pigments endocrocin and clavorubin are products from the same PKS derived precursors and the latter are likely shunt products in the pathway of xanthone biosynthesis. It is proposed that atrochrysone carboxylic acid released from the PKS CPUR_05437 can also be converted to endocrocin anthrone which is further oxidized into endocrocin by CPUR_05435. Endocrocin could be then modified to clavorubin, possibly by CPUR_05423 and CPUR_05431. Clavorubin is the principal anthraquinone metabolite produced by the cluster with a much higher yield compared to endocrocin. The sequence is that of Atrochrysone carboxyl ACP thioesterase CPUR_05436 from Claviceps purpurea (strain 20.1) (Ergot fungus).